The chain runs to 407 residues: D-mannose isomerase (407 aa).

Residues His251 and His383 each act as proton donor/acceptor in the active site.

This sequence belongs to the N-acylglucosamine 2-epimerase family. In terms of assembly, homodimer.

The enzyme catalyses D-mannose = D-fructose. It carries out the reaction D-lyxose = D-xylulose. Its activity is regulated as follows. Significantly inhibited by divalent metal ions such as Cu(2+), Cd(2+) or Ca(2+). Its function is as follows. Catalyzes the reversible isomerization of D-mannose to D-fructose. Shows weaker activity on D-lyxose, but cannot use N-acetyl D-glucosamine. This chain is D-mannose isomerase, found in Thermobifida fusca (Thermomonospora fusca).